The following is a 72-amino-acid chain: Conorfamide-Tx2 (72 aa).

The first 19 residues, 1-19 (MSGRGFLLLALLLLVTVEA), serve as a signal peptide directing secretion. Residues 20–25 (TRVEKK) constitute a propeptide that is removed on maturation. The segment at 32–39 (AWSGPRNR) is positively charged region crucial for activity against MRGPRX1 receptors. The residue at position 43 (I43) is an Isoleucine amide. A propeptide spanning residues 44–72 (GRRDMQSPLLSERLRFRALGFRQPSSQKQ) is cleaved from the precursor.

This sequence belongs to the FARP (FMRFamide related peptide) family. In terms of tissue distribution, expressed by the venom duct.

The protein localises to the secreted. Functionally, this peptide activates human sensory neuron-specific G-protein coupled receptors MRGPRX1, but not mouse receptors (EC(50)=0.54 uM). Compared with the agonist chloroquine (anti-malaria drug), it is 600-fold more potent. In vivo, induces itch sensation, since intradermal cheek injection into humanized transgenic mouse (mouse MRGPRX1 replaced by human MRGPRX1) induces scratching. In vivo, treatment of zebrafish larvae with high doses (10 uM) induces hypoactivity at the beginning of the experiment during the dark phase and hyperactivity in the strobe phase after one hour, even after the removal of the toxin from the solution. In Conus textile (Cloth-of-gold cone), this protein is Conorfamide-Tx2.